A 283-amino-acid polypeptide reads, in one-letter code: MIIHHQFDPVLISIGPLAVRWYALSYILGFILFTFLGRRRIAQGLSVFTKESLDDFLTWGILGVILGGRLGYVLFYKFSDYLAHPLDIFKVWEGGMSFHGGFLGVVIAIWLFSRKHGIGFLKLMDTVAPLVPLGLASGRIGNFINGELWGRITDINAFWAMGFPQAHYEDAEAAAHNPLWAEWLQQYGMLPRHPSQLYQFALEGICLFAVVWLFSKKPRPTGQTAALFLGGYGVFRFIAEFARQPDDYLGLLTLGLSMGQWLSVPMIVLGIVGFVRFGMKKQH.

3 helical membrane passes run 17 to 37, 56 to 76, and 92 to 112; these read LAVR…TFLG, FLTW…VLFY, and WEGG…IWLF. Arg139 is an a 1,2-diacyl-sn-glycero-3-phospho-(1'-sn-glycerol) binding site. 2 consecutive transmembrane segments (helical) span residues 222 to 242 and 255 to 275; these read GQTA…AEFA and GLSM…VGFV.

The protein belongs to the Lgt family.

It localises to the cell inner membrane. It catalyses the reaction L-cysteinyl-[prolipoprotein] + a 1,2-diacyl-sn-glycero-3-phospho-(1'-sn-glycerol) = an S-1,2-diacyl-sn-glyceryl-L-cysteinyl-[prolipoprotein] + sn-glycerol 1-phosphate + H(+). It functions in the pathway protein modification; lipoprotein biosynthesis (diacylglyceryl transfer). Its function is as follows. Catalyzes the transfer of the diacylglyceryl group from phosphatidylglycerol to the sulfhydryl group of the N-terminal cysteine of a prolipoprotein, the first step in the formation of mature lipoproteins. This Neisseria gonorrhoeae (strain ATCC 700825 / FA 1090) protein is Phosphatidylglycerol--prolipoprotein diacylglyceryl transferase.